The primary structure comprises 348 residues: Histidinol-phosphate aminotransferase (348 aa).

Position 210 is an N6-(pyridoxal phosphate)lysine (K210).

It belongs to the class-II pyridoxal-phosphate-dependent aminotransferase family. Histidinol-phosphate aminotransferase subfamily. Homodimer. The cofactor is pyridoxal 5'-phosphate.

It catalyses the reaction L-histidinol phosphate + 2-oxoglutarate = 3-(imidazol-4-yl)-2-oxopropyl phosphate + L-glutamate. The protein operates within amino-acid biosynthesis; L-histidine biosynthesis; L-histidine from 5-phospho-alpha-D-ribose 1-diphosphate: step 7/9. The protein is Histidinol-phosphate aminotransferase of Pseudomonas putida (strain W619).